We begin with the raw amino-acid sequence, 642 residues long: Chaperone protein DnaK (642 aa).

The residue at position 196 (Thr-196) is a Phosphothreonine; by autocatalysis. A compositionally biased stretch (polar residues) spans 593 to 603; it reads STMYQTPSGDT. The tract at residues 593 to 642 is disordered; that stretch reads STMYQTPSGDTPPSEPETGASEESKGGDKTQGDGEVDAEYEVIDGNDKDK. Over residues 614-624 the composition is skewed to basic and acidic residues; sequence EESKGGDKTQG. Residues 626–636 show a composition bias toward acidic residues; the sequence is GEVDAEYEVID.

The protein belongs to the heat shock protein 70 family.

Functionally, acts as a chaperone. The chain is Chaperone protein DnaK from Chlorobium phaeobacteroides (strain BS1).